We begin with the raw amino-acid sequence, 705 residues long: Probable cyclic nucleotide-gated ion channel 16 (705 aa).

The Cytoplasmic portion of the chain corresponds to 1–57 (MSNLHLYTSARFRNFPTTFSLRHHHNDPNNQRRRSIFSKLRDKTLDPGGDLITRWNH). The chain crosses the membrane as a helical span at residues 58–78 (IFLITCLLALFLDPLYFYLPI). The Extracellular portion of the chain corresponds to 79 to 91 (VQAGTACMSIDVR). The helical transmembrane segment at 92–112 (FGIFVTCFRNLADLSFLIHIL) threads the bilayer. Residues 113 to 147 (LKFKTAFVSKSSRVFGRGELVMDRREIAIRYLKSE) are Cytoplasmic-facing. Residues 148–168 (FVIDLAATLPLPQIMIWFVIP) form a helical membrane-spanning segment. The Extracellular portion of the chain corresponds to 169-180 (NAGEFRYAAHQN). Residues 181-201 (HTLSLIVLIQYVPRFLVMLPL) traverse the membrane as a helical segment. Residues 202–222 (NRRIIKATGVAAKTAWSGAAY) lie on the Cytoplasmic side of the membrane. The helical transmembrane segment at 223 to 243 (NLILYLLVSHVLGSVWYVLSI) threads the bilayer. Residues 244 to 353 (QRQHECWRRE…LAASTLSSET (110 aa)) are Extracellular-facing. Residues 354–374 (IFSCFICVAGLVFFSHLIGNV) traverse the membrane as a helical segment. Residues 375-705 (QNYLQSTTAR…MFKPEDPGFF (331 aa)) are Cytoplasmic-facing. A nucleoside 3',5'-cyclic phosphate is bound by residues 457–580 (FFAQ…HSKK) and E528. The interval 573-588 (FRRLHSKKLQHAFRYY) is calmodulin-binding. The IQ domain maps to 593 to 622 (RAWGTCFIQAAWRRYMKRKLAMELARQEEE). Disordered regions lie at residues 636–655 (EEDMPESNNNNGDENSSNNQ) and 672–705 (RGVLGNQRGSTRIDPDHPTLKMPKMFKPEDPGFF). The span at 642–655 (SNNNNGDENSSNNQ) shows a compositional bias: low complexity.

The protein belongs to the cyclic nucleotide-gated cation channel (TC 1.A.1.5) family. As to quaternary structure, homotetramer or heterotetramer.

Its subcellular location is the cell membrane. Functionally, putative cyclic nucleotide-gated ion channel. This chain is Probable cyclic nucleotide-gated ion channel 16 (CNGC16), found in Arabidopsis thaliana (Mouse-ear cress).